The primary structure comprises 512 residues: Eukaryotic translation initiation factor 3 subunit L (512 aa).

The 187-residue stretch at 291 to 477 (DAFRLFESIL…GERQFTDSVD (187 aa)) folds into the PCI domain.

The protein belongs to the eIF-3 subunit L family. As to quaternary structure, component of the eukaryotic translation initiation factor 3 (eIF-3) complex.

The protein resides in the cytoplasm. Functionally, component of the eukaryotic translation initiation factor 3 (eIF-3) complex, which is involved in protein synthesis of a specialized repertoire of mRNAs and, together with other initiation factors, stimulates binding of mRNA and methionyl-tRNAi to the 40S ribosome. The eIF-3 complex specifically targets and initiates translation of a subset of mRNAs involved in cell proliferation. The polypeptide is Eukaryotic translation initiation factor 3 subunit L (Monosiga brevicollis (Choanoflagellate)).